The chain runs to 137 residues: Ribosome-binding factor A (137 aa).

Belongs to the RbfA family. Monomer. Binds 30S ribosomal subunits, but not 50S ribosomal subunits or 70S ribosomes.

It localises to the cytoplasm. Its function is as follows. One of several proteins that assist in the late maturation steps of the functional core of the 30S ribosomal subunit. Associates with free 30S ribosomal subunits (but not with 30S subunits that are part of 70S ribosomes or polysomes). Required for efficient processing of 16S rRNA. May interact with the 5'-terminal helix region of 16S rRNA. This Nitrobacter hamburgensis (strain DSM 10229 / NCIMB 13809 / X14) protein is Ribosome-binding factor A.